A 432-amino-acid chain; its full sequence is Gamma-glutamyl phosphate reductase (432 aa).

The protein belongs to the gamma-glutamyl phosphate reductase family.

The protein localises to the cytoplasm. The enzyme catalyses L-glutamate 5-semialdehyde + phosphate + NADP(+) = L-glutamyl 5-phosphate + NADPH + H(+). It functions in the pathway amino-acid biosynthesis; L-proline biosynthesis; L-glutamate 5-semialdehyde from L-glutamate: step 2/2. Functionally, catalyzes the NADPH-dependent reduction of L-glutamate 5-phosphate into L-glutamate 5-semialdehyde and phosphate. The product spontaneously undergoes cyclization to form 1-pyrroline-5-carboxylate. This Corynebacterium glutamicum (strain R) protein is Gamma-glutamyl phosphate reductase.